Here is a 216-residue protein sequence, read N- to C-terminus: Glycerol-3-phosphate acyltransferase (216 aa).

Transmembrane regions (helical) follow at residues Ile4–Val24, Val56–Leu76, Pro80–Phe100, Phe112–Leu132, and Gly138–Phe158.

Belongs to the PlsY family. As to quaternary structure, probably interacts with PlsX.

The protein resides in the cell inner membrane. It carries out the reaction an acyl phosphate + sn-glycerol 3-phosphate = a 1-acyl-sn-glycero-3-phosphate + phosphate. It functions in the pathway lipid metabolism; phospholipid metabolism. Its function is as follows. Catalyzes the transfer of an acyl group from acyl-phosphate (acyl-PO(4)) to glycerol-3-phosphate (G3P) to form lysophosphatidic acid (LPA). This enzyme utilizes acyl-phosphate as fatty acyl donor, but not acyl-CoA or acyl-ACP. This Yersinia pseudotuberculosis serotype O:1b (strain IP 31758) protein is Glycerol-3-phosphate acyltransferase.